A 114-amino-acid polypeptide reads, in one-letter code: uncharacterized protein (114 aa).

This is an uncharacterized protein from Escherichia coli O6:H1 (strain CFT073 / ATCC 700928 / UPEC).